A 784-amino-acid polypeptide reads, in one-letter code: Protein Skeletor, isoforms B/C (784 aa).

The N-terminal stretch at Met-1–Ala-28 is a signal peptide. DM13 domains lie at Gly-34–Pro-143 and Pro-151–Pro-258. Residues Leu-287–Gly-419 form the DOMON domain. The interval Pro-451–Pro-491 is disordered.

In terms of assembly, interacts with Chro and Mgtor as part of a macromolecular complex forming the spindle matrix. Chro colocalizes with Skeletor (Skel) on the chromosomes at interphase and on spindle during metaphase.

It is found in the cytoplasm. The protein localises to the cytoskeleton. It localises to the spindle. The protein resides in the nucleus. Its subcellular location is the nucleolus. It is found in the chromosome. In terms of biological role, provides structural support to stabilize and organize the microtubule spindle during mitosis (within embryonic somatic cells) and meiosis (within spermatocytes). The role in mitosis regulation depends on the Ran pathway. The polypeptide is Protein Skeletor, isoforms B/C (Drosophila melanogaster (Fruit fly)).